The primary structure comprises 128 residues: Small ribosomal subunit protein uS11 (128 aa).

Belongs to the universal ribosomal protein uS11 family. In terms of assembly, part of the 30S ribosomal subunit. Interacts with proteins S7 and S18. Binds to IF-3.

Its function is as follows. Located on the platform of the 30S subunit, it bridges several disparate RNA helices of the 16S rRNA. Forms part of the Shine-Dalgarno cleft in the 70S ribosome. This Wolbachia pipientis wMel protein is Small ribosomal subunit protein uS11.